Reading from the N-terminus, the 101-residue chain is Ubiquitin-related modifier 1 homolog (101 aa).

G101 is modified (1-thioglycine). A Glycyl lysine isopeptide (Gly-Lys) (interchain with K-? in acceptor proteins) cross-link involves residue G101.

The protein belongs to the URM1 family. In terms of assembly, interacts with cer. Post-translationally, C-terminal thiocarboxylation occurs in 2 steps, it is first acyl-adenylated (-COAMP) via the hesA/moeB/thiF part of the MOCS3 homolog, then thiocarboxylated (-COSH) via the rhodanese domain of the MOCS3 homolog.

It localises to the cytoplasm. It functions in the pathway tRNA modification; 5-methoxycarbonylmethyl-2-thiouridine-tRNA biosynthesis. Functionally, acts as a sulfur carrier required for 2-thiolation of mcm(5)S(2)U at tRNA wobble positions of cytosolic tRNA(Lys), tRNA(Glu) and tRNA(Gln). Serves as sulfur donor in tRNA 2-thiolation reaction by being thiocarboxylated (-COSH) at its C-terminus by MOCS3. The sulfur is then transferred to tRNA to form 2-thiolation of mcm(5)S(2)U. Also acts as a ubiquitin-like protein (UBL) that is covalently conjugated via an isopeptide bond to lysine residues of target proteins such as Prx2/Jafrac1, Ciao1, Eip71CD and GILT1. The thiocarboxylated form serves as substrate for conjugation and oxidative stress specifically induces the formation of UBL-protein conjugates. The polypeptide is Ubiquitin-related modifier 1 homolog (Drosophila ananassae (Fruit fly)).